The sequence spans 524 residues: Ribonuclease Y (524 aa).

Residues 7-27 (LGGLLTGIVIAIIASIIASVI) form a helical membrane-spanning segment. A KH domain is found at 214-299 (TVSVVPLPND…EMVEKARKEV (86 aa)). Positions 340–433 (VLSHSIEVAR…VQAADSISAA (94 aa)) constitute an HD domain.

This sequence belongs to the RNase Y family.

The protein resides in the cell membrane. In terms of biological role, endoribonuclease that initiates mRNA decay. The protein is Ribonuclease Y of Acetivibrio thermocellus (strain ATCC 27405 / DSM 1237 / JCM 9322 / NBRC 103400 / NCIMB 10682 / NRRL B-4536 / VPI 7372) (Clostridium thermocellum).